We begin with the raw amino-acid sequence, 133 residues long: CDGSH iron-sulfur domain-containing protein 2 homolog (133 aa).

The Lumenal segment spans residues Met-1–Asp-35. Residues Trp-36 to Cys-58 traverse the membrane as a helical segment. Residues Pro-59–Lys-133 are Cytoplasmic-facing. [2Fe-2S] cluster contacts are provided by Cys-100, Cys-102, Cys-111, and His-115.

It belongs to the CISD protein family. CISD2 subfamily. The cofactor is [2Fe-2S] cluster.

It is found in the endoplasmic reticulum membrane. This is CDGSH iron-sulfur domain-containing protein 2 homolog from Drosophila yakuba (Fruit fly).